A 286-amino-acid chain; its full sequence is Small ribosomal subunit protein uS15m (286 aa).

The N-terminal 33 residues, 1-33 (MSIVGRNAILNLRISLCPLFMGKRSFVSSPVSN), are a transit peptide targeting the mitochondrion.

It belongs to the universal ribosomal protein uS15 family. In terms of assembly, component of the mitochondrial small ribosomal subunit (mt-SSU). Mature yeast 74S mitochondrial ribosomes consist of a small (37S) and a large (54S) subunit. The 37S small subunit contains a 15S ribosomal RNA (15S mt-rRNA) and 34 different proteins. The 54S large subunit contains a 21S rRNA (21S mt-rRNA) and 46 different proteins. In terms of processing, the precursor is processed in two steps involving mitochondrial intermediate peptidase (MIP) and mitochondrial processing peptidase (MPP).

The protein localises to the mitochondrion. Its function is as follows. Component of the mitochondrial ribosome (mitoribosome), a dedicated translation machinery responsible for the synthesis of mitochondrial genome-encoded proteins, including at least some of the essential transmembrane subunits of the mitochondrial respiratory chain. The mitoribosomes are attached to the mitochondrial inner membrane and translation products are cotranslationally integrated into the membrane. The chain is Small ribosomal subunit protein uS15m (MRPS28) from Saccharomyces cerevisiae (strain ATCC 204508 / S288c) (Baker's yeast).